The following is a 250-amino-acid chain: MFMALRAPMLERMNGLHTDDAPVNWLERRGGRLTSRRRVTLLHAGVEHPMRLWGVQSEAITAAMVLSRKVSAIIAGHCGVRLVDQGVGDGFVAAFAHASDAVACALELHQAPLSPIVLRIGIHTGEAQLVDERIYAGATMNLAAELRDLAHGGQTVMSGATEDAVLGRLPMRAWLIGLRPMEGSPEGHNFPQSQRIAQLCHPNLRNTFPPLRMRIADASGIPYVGRILVNVQVVPHWEGGCAAAGMVLAG.

This sequence to class-3 of adenylyl cyclases.

This is an uncharacterized protein from Mycobacterium tuberculosis (strain ATCC 25618 / H37Rv).